The following is a 458-amino-acid chain: Phenylalanine-specific permease (458 aa).

The Cytoplasmic portion of the chain corresponds to 1 to 27; it reads MKNASTVSEDTASNQEPTLHRGLHNRH. A helical membrane pass occupies residues 28–48; the sequence is IQLIALGGAIGTGLFLGIGPA. Residues 49 to 50 are Periplasmic-facing; that stretch reads IQ. A helical transmembrane segment spans residues 51–71; the sequence is MAGPAVLLGYGVAGIIAFLIM. Residues 72 to 105 are Cytoplasmic-facing; the sequence is RQLGEMVVEEPVSGSFAHFAYKYWGPFAGFLSGW. Residues 106-126 traverse the membrane as a helical segment; it reads NYWVMFVLVGMAELTAAGIYM. At 127–132 the chain is on the periplasmic side; it reads QYWFPD. Residues 133-153 form a helical membrane-spanning segment; sequence VPTWIWAAAFFIIINAVNLVN. The Cytoplasmic segment spans residues 154–160; it reads VRLYGET. A helical membrane pass occupies residues 161–181; sequence EFWFALIKVLAIIGMIGFGLW. Residues 182 to 196 are Periplasmic-facing; sequence LLFSGHGGEKASIDN. Residues 197–217 traverse the membrane as a helical segment; sequence LWRYGGFFATGWNGLILSLAV. Over 218–250 the chain is Cytoplasmic; that stretch reads IMFSFGGLELIGITAAEARDPEKSIPKAVNQVV. Residues 251–271 traverse the membrane as a helical segment; that stretch reads YRILLFYIGSLVVLLALYPWV. The Periplasmic segment spans residues 272 to 288; sequence EVKSNSSPFVMIFHNLD. The chain crosses the membrane as a helical span at residues 289-309; it reads SNVVASALNFVILVASLSVYN. Residues 310 to 341 are Cytoplasmic-facing; sequence SGVYSNSRMLFGLSVQGNAPKFLTRVSRRGVP. A helical transmembrane segment spans residues 342 to 362; sequence INSLMLSGAITSLVVLINYLL. Residues 363-367 are Periplasmic-facing; that stretch reads PQKAF. The chain crosses the membrane as a helical span at residues 368 to 388; sequence GLLMALVVATLLLNWIMICLA. Topologically, residues 389-411 are cytoplasmic; sequence HLRFRAAMRRQGRETQFKALLYP. Residues 412-432 form a helical membrane-spanning segment; it reads FGNYLCIAFLGMILLLMCTMD. The Periplasmic segment spans residues 433–434; that stretch reads DM. Residues 435–455 form a helical membrane-spanning segment; the sequence is RLSAILLPVWIVFLFMAFKTL. Topologically, residues 456–458 are cytoplasmic; it reads RRK.

The protein belongs to the amino acid-polyamine-organocation (APC) superfamily. Amino acid transporter (AAT) (TC 2.A.3.1) family.

It is found in the cell inner membrane. It carries out the reaction L-phenylalanine(in) + H(+)(in) = L-phenylalanine(out) + H(+)(out). Its function is as follows. Permease that is involved in the active transport across the cytoplasmic membrane of phenylalanine. Can also transport tyrosine, but not tryptophan. In Escherichia coli (strain K12), this protein is Phenylalanine-specific permease.